The primary structure comprises 271 residues: MPIITKISTQKRKGRYNIFIDNEYAFSVSERTLAEKRLLKGTELSLEDIEKIKKAEADSHALQLAMSYLSYQPRSVYEVLTYLNKQGISPEASQSAIENLIELNYLDDNNFARLFIQNNLRVGKDGPRSISSKLKQKGVANDIIQDSLYEVDDEEWIEAGMRLIHSIGHQVGKMSYKEIKQKALKKLQTHGFNQELGELVVDQLDLESTEDDQLEALKKQGIKAWRRYRRDDDFKRRQKVKRYLFQHGFSSGEIDSFLSGEVVNLEEIDEY.

Belongs to the RecX family.

The protein resides in the cytoplasm. In terms of biological role, modulates RecA activity. The polypeptide is Regulatory protein RecX (Lactobacillus johnsonii (strain CNCM I-12250 / La1 / NCC 533)).